The following is a 212-amino-acid chain: Nuclear phosphoprotein UL3 homolog (212 aa).

This sequence belongs to the alphaherpesvirinae HHV-1 UL3 family. Phosphorylated.

Its subcellular location is the host nucleus. The chain is Nuclear phosphoprotein UL3 homolog from Equus caballus (Horse).